A 1159-amino-acid chain; its full sequence is MLDFLAENNLCGQAILRIVSCGNAIIAEVLRLSEFIPAVFLLKDRADQQRYGDIIFDFSYFKGPEFWESKLEAKPELQDLDEEFRENNIEIVTRFYLAFQSVHKYIVDLNRYLDDLNEGVYIQQTLETVLLSEDGKQLLCEALYLYGVMLLVIDQKIEGEVRERMLVSYYRYSAARSSADSNMDDICKLLRSTGYSSQPGAKRPPNYPESYFQRVPINETFISMVIGRLRSDDIYNQVSAYPLPEHRSTALANQAAMLYVILYFEPSILHTHQAKMREIVDKYFPDNWVISIYMGITVNLADAWEPYKAAKTALNNTLDLANVKEQASRYASVSDRVRAQVQQFLKEGYLREEVLLDNIPRLLNCLRDCNVAIRWLMLHTADSACDPNNKRLRQIKDQILADSRYNPKILFQLLLDTAQFEFILKEMFKQMLSEKQSKWEHYKKEGSERMTELADVFSGVKPLTRVEKNENLQAWFREISKQILSLNYDDSTAAGRKTVQLIQALEEVQEFHQLESNLQVCQFLADTRKFLHQMIRTINIKEEVLITVQIIGDLSFAWQLIDSFTSIMQESIRVNPSMVTKLRATFLKLASALDLPLLRINQANSPDLLSVSQYYSGELVSYVRKVLQIIPESMFTSLLKIIKLQTHDIMEVPTRLDKDKLRDYAQLGPRYEVAKLTHAISIFTEGILMMKTTLVGIIKVDPKQLLEDGIRKELVKRVAFALHRGLIFNPRAKPSELMPKLKELGATMDGFHRSFEYIQDYVSIYGLKIWQEEVSRIINYNVEQECNNFLRTKIQDWQSMYQSTHIPIPKFAPVDESITFIGRLCREILRITDPKMTCYIDQLNTWYDVKTHQEVTSSRLFSEIQTTLGTFGLNGLDRLLCFMIVKELQNFLSMFQKIILKERTVQETLKMLMSAVNPLKSIVANSSKVYLSAITKTQKIWSAYLEAIMKVGQMQILRQQIANELNSSCRFDSRHLAAALDNLNKALLADIEAHYRDPSLPYPKEDNTLLYEITAYLEAAGIHNPLNKIYITTKRLPYFPIVNFLFLIAQLPKLQYNKNLGMVCRKPADPVDWPPLVLGLLTLLKQFHSRYTEQFLALIGQFIRSTMEQCTSQKMPEMPADAVGALLFLEDYVRYTKLPRRVAEAHVPNFIFDEFRTVL.

The protein belongs to the strumpellin family. In terms of assembly, component of the WASH core complex also described as WASH regulatory complex (SHRC) composed of WASH (WASHC1, WASH2P or WASH3P), WASHC2 (WASHC2A or WASHC2C), WASHC3, WASHC4 and WASHC5. The WASH core complex associates via WASHC2 with the F-actin-capping protein dimer (formed by CAPZA1, CAPZA2 or CAPZA3 and CAPZB) in a transient or substoichiometric manner which was initially described as WASH complex. Interacts with VCP, PI4K2A.

The protein resides in the cytoplasm. The protein localises to the cytosol. It localises to the endoplasmic reticulum. Its subcellular location is the early endosome. In terms of biological role, acts as a component of the WASH core complex that functions as a nucleation-promoting factor (NPF) at the surface of endosomes, where it recruits and activates the Arp2/3 complex to induce actin polymerization, playing a key role in the fission of tubules that serve as transport intermediates during endosome sorting. May be involved in axonal outgrowth. Involved in cellular localization of ADRB2. Involved in cellular trafficking of BLOC-1 complex cargos such as ATP7A and VAMP7. Involved in cytokinesis and following polar body extrusion during oocyte meiotic maturation. This chain is WASH complex subunit 5, found in Mus musculus (Mouse).